The chain runs to 775 residues: Semaphorin-3E (775 aa).

The N-terminal stretch at 1–25 (MASAGHIITLLLWGYLLELWTGGHT) is a signal peptide. Residues 32-516 (RLRLSHKELL…SASAVAQVRF (485 aa)) form the Sema domain. A glycan (N-linked (GlcNAc...) asparagine) is linked at Asn-44. A disulfide bridge connects residues Cys-105 and Cys-115. An N-linked (GlcNAc...) asparagine glycan is attached at Asn-126. Disulfide bonds link Cys-133/Cys-142, Cys-270/Cys-382, Cys-294/Cys-342, and Cys-519/Cys-537. Asn-330 carries an N-linked (GlcNAc...) asparagine glycan. One can recognise an Ig-like C2-type domain in the interval 581 to 669 (ALDKTEEHLA…SFVHTVRKIT (89 aa)). Residues Asn-595 and Asn-596 are each glycosylated (N-linked (GlcNAc...) asparagine). The cysteines at positions 654 and 729 are disulfide-linked. A disordered region spans residues 742 to 775 (LKMSPSKWKYANPQEKKLRSKPEHYRLPRHTLDS). Residues 755–775 (QEKKLRSKPEHYRLPRHTLDS) show a composition bias toward basic and acidic residues.

It belongs to the semaphorin family. Interacts with PLXND1.

The protein resides in the secreted. Plays an important role in signaling via the cell surface receptor PLXND1. Mediates reorganization of the actin cytoskeleton, leading to the retraction of cell projections. Promotes focal adhesion disassembly and inhibits adhesion of endothelial cells to the extracellular matrix. Regulates angiogenesis, both during embryogenesis and after birth. Can down-regulate sprouting angiogenesis. Required for normal vascular patterning during embryogenesis. Plays an important role in ensuring the specificity of synapse formation. The sequence is that of Semaphorin-3E (SEMA3E) from Homo sapiens (Human).